Here is a 197-residue protein sequence, read N- to C-terminus: Imidazoleglycerol-phosphate dehydratase (197 aa).

This sequence belongs to the imidazoleglycerol-phosphate dehydratase family.

It localises to the cytoplasm. The catalysed reaction is D-erythro-1-(imidazol-4-yl)glycerol 3-phosphate = 3-(imidazol-4-yl)-2-oxopropyl phosphate + H2O. It functions in the pathway amino-acid biosynthesis; L-histidine biosynthesis; L-histidine from 5-phospho-alpha-D-ribose 1-diphosphate: step 6/9. The chain is Imidazoleglycerol-phosphate dehydratase from Pseudomonas putida (strain ATCC 700007 / DSM 6899 / JCM 31910 / BCRC 17059 / LMG 24140 / F1).